Consider the following 457-residue polypeptide: Glutamate--tRNA ligase 2 (457 aa).

Residues 9–19 (PSPTGYIHIGN) carry the 'HIGH' region motif. The short motif at 250–254 (GLSKR) is the 'KMSKS' region element. Residue lysine 253 coordinates ATP.

The protein belongs to the class-I aminoacyl-tRNA synthetase family. Glutamate--tRNA ligase type 1 subfamily. In terms of assembly, monomer.

Its subcellular location is the cytoplasm. It catalyses the reaction tRNA(Glu) + L-glutamate + ATP = L-glutamyl-tRNA(Glu) + AMP + diphosphate. In terms of biological role, catalyzes the attachment of glutamate to tRNA(Glu) in a two-step reaction: glutamate is first activated by ATP to form Glu-AMP and then transferred to the acceptor end of tRNA(Glu). The sequence is that of Glutamate--tRNA ligase 2 from Brucella melitensis biotype 1 (strain ATCC 23456 / CCUG 17765 / NCTC 10094 / 16M).